The following is a 434-amino-acid chain: Citrate synthase (434 aa).

Residues His-310 and Asp-368 contribute to the active site.

Belongs to the citrate synthase family.

It catalyses the reaction oxaloacetate + acetyl-CoA + H2O = citrate + CoA + H(+). It functions in the pathway carbohydrate metabolism; tricarboxylic acid cycle; isocitrate from oxaloacetate: step 1/2. The polypeptide is Citrate synthase (gltA) (Bradyrhizobium diazoefficiens (strain JCM 10833 / BCRC 13528 / IAM 13628 / NBRC 14792 / USDA 110)).